A 507-amino-acid chain; its full sequence is Ribosomal protein uS12 methylthiotransferase RimO (507 aa).

The region spanning 13 to 124 (RRVALLTLGC…ISDRLGAVLA (112 aa)) is the MTTase N-terminal domain. 3 residues coordinate [4Fe-4S] cluster: Cys-22, Cys-58, and Cys-87. The tract at residues 150–175 (AAVSLPGHGTRAAAAGPGGRSAPVEV) is disordered. The segment covering 155–172 (PGHGTRAAAAGPGGRSAP) has biased composition (low complexity). A Radical SAM core domain is found at 191–422 (LDTGPVASLK…ALADELCAQR (232 aa)). 3 residues coordinate [4Fe-4S] cluster: Cys-205, Cys-209, and Cys-212. Positions 424 to 497 (EQRLGSTVQV…GVDLVAVPDG (74 aa)) constitute a TRAM domain.

This sequence belongs to the methylthiotransferase family. RimO subfamily. The cofactor is [4Fe-4S] cluster.

It is found in the cytoplasm. It carries out the reaction L-aspartate(89)-[ribosomal protein uS12]-hydrogen + (sulfur carrier)-SH + AH2 + 2 S-adenosyl-L-methionine = 3-methylsulfanyl-L-aspartate(89)-[ribosomal protein uS12]-hydrogen + (sulfur carrier)-H + 5'-deoxyadenosine + L-methionine + A + S-adenosyl-L-homocysteine + 2 H(+). In terms of biological role, catalyzes the methylthiolation of an aspartic acid residue of ribosomal protein uS12. The polypeptide is Ribosomal protein uS12 methylthiotransferase RimO (Salinispora arenicola (strain CNS-205)).